Reading from the N-terminus, the 202-residue chain is ATP-dependent Clp protease proteolytic subunit (202 aa).

Catalysis depends on serine 106, which acts as the Nucleophile. The active site involves histidine 131.

The protein belongs to the peptidase S14 family. Fourteen ClpP subunits assemble into 2 heptameric rings which stack back to back to give a disk-like structure with a central cavity, resembling the structure of eukaryotic proteasomes.

It is found in the cytoplasm. The catalysed reaction is Hydrolysis of proteins to small peptides in the presence of ATP and magnesium. alpha-casein is the usual test substrate. In the absence of ATP, only oligopeptides shorter than five residues are hydrolyzed (such as succinyl-Leu-Tyr-|-NHMec, and Leu-Tyr-Leu-|-Tyr-Trp, in which cleavage of the -Tyr-|-Leu- and -Tyr-|-Trp bonds also occurs).. Cleaves peptides in various proteins in a process that requires ATP hydrolysis. Has a chymotrypsin-like activity. Plays a major role in the degradation of misfolded proteins. This chain is ATP-dependent Clp protease proteolytic subunit, found in Variovorax paradoxus (strain S110).